Reading from the N-terminus, the 132-residue chain is Small ribosomal subunit protein uS11 (132 aa).

Positions 1–16 are enriched in basic residues; sequence MAAGMKGKRSRRRKER. Residues 1-20 are disordered; sequence MAAGMKGKRSRRRKERKNVE.

This sequence belongs to the universal ribosomal protein uS11 family. As to quaternary structure, part of the 30S ribosomal subunit. Interacts with proteins S7 and S18. Binds to IF-3.

Located on the platform of the 30S subunit, it bridges several disparate RNA helices of the 16S rRNA. Forms part of the Shine-Dalgarno cleft in the 70S ribosome. The protein is Small ribosomal subunit protein uS11 of Clostridium botulinum (strain Loch Maree / Type A3).